We begin with the raw amino-acid sequence, 478 residues long: Growth/differentiation factor 10 (478 aa).

The N-terminal stretch at 1 to 33 (MAHVPARTSPGPGPQLLLLLLPLFLLLLRDVAG) is a signal peptide. Residues 34–368 (SHRAPAWSAL…EKTMQKARRK (335 aa)) constitute a propeptide that is removed on maturation. N-linked (GlcNAc...) asparagine glycans are attached at residues Asn118, Asn156, and Asn281. The segment at 266-319 (YDPFPAGDPEPRAAPNNSADPRVRRAAQATGPLQDNELPGLDERPPRAHAQHFH) is disordered. 3 disulfides stabilise this stretch: Cys376–Cys443, Cys405–Cys475, and Cys409–Cys477. The N-linked (GlcNAc...) asparagine glycan is linked to Asn469.

This sequence belongs to the TGF-beta family. Homodimer or heterodimer. Can form a non-covalent complex of the mature region and the pro-region. Expressed in femur, brain, lung, skeletal muscle, pancreas and testis.

Its subcellular location is the secreted. Its function is as follows. Growth factor involved in osteogenesis and adipogenesis. Plays an inhibitory role in the process of osteoblast differentiation via SMAD2/3 pathway. Plays an inhibitory role in the process of adipogenesis. This chain is Growth/differentiation factor 10, found in Homo sapiens (Human).